The sequence spans 395 residues: Vascular endothelial growth factor A, long form (395 aa).

2 disordered regions span residues 1–45 (MTDR…VEGV) and 73–175 (EAEP…AGPG). Residues 73 to 85 (EAEPSGAARSASS) show a composition bias toward low complexity. Residues 91 to 102 (QPEEGEEEEEKE) show a composition bias toward acidic residues. 2 stretches are compositionally biased toward low complexity: residues 123–143 (AAVC…ARAS) and 165–175 (RRGSASRAGPG). Intrachain disulfides connect cysteine 232-cysteine 274, cysteine 263-cysteine 308, and cysteine 267-cysteine 310. Residue asparagine 281 is glycosylated (N-linked (GlcNAc...) asparagine). A compositionally biased stretch (basic and acidic residues) spans 314 to 323 (KDRARQEKKS). Residues 314-344 (KDRARQEKKSVRGKGKGQKRKRKKSRYKSWS) are disordered. Over residues 324–340 (VRGKGKGQKRKRKKSRY) the composition is skewed to basic residues.

Belongs to the PDGF/VEGF growth factor family. Homodimer; disulfide-linked. Also found as heterodimer with PGF. Interacts with NRP1. Interacts with isoform 2 of BSG. Interacts with CD82; this interaction inhibits VEGFA-mediated signaling pathway. In terms of processing, produced by use of an alternative upstream CUG codon and post-translationally processed into the N-terminal N-VEGF form and the C-terminal secreted VEGFA form. Higher expression in pituitary tumors than the pituitary gland. As to expression, widely expressed. In terms of tissue distribution, not widely expressed.

It localises to the cytoplasm. Its subcellular location is the nucleus. It is found in the secreted. The protein localises to the endoplasmic reticulum. The protein resides in the golgi apparatus. It localises to the extracellular space. Its subcellular location is the extracellular matrix. In terms of biological role, participates in the induction of key genes involved in the response to hypoxia and in the induction of angiogenesis such as HIF1A. Involved in protecting cells from hypoxia-mediated cell death. Growth factor active in angiogenesis, vasculogenesis and endothelial cell growth. Induces endothelial cell proliferation, promotes cell migration, inhibits apoptosis and induces permeabilization of blood vessels. Binds to the FLT1/VEGFR1 and KDR/VEGFR2 receptors, heparan sulfate and heparin. Binds to the NRP1/neuropilin-1 receptor. Binding to NRP1 initiates a signaling pathway needed for motor neuron axon guidance and cell body migration, including for the caudal migration of facial motor neurons from rhombomere 4 to rhombomere 6 during embryonic development. Also binds the DEAR/FBXW7-AS1 receptor. Its function is as follows. Binds to the KDR receptor but does not activate downstream signaling pathways, does not activate angiogenesis and inhibits tumor growth. In Homo sapiens (Human), this protein is Vascular endothelial growth factor A, long form (VEGFA).